The sequence spans 336 residues: Anthranilate phosphoribosyltransferase (336 aa).

Residues G79, 82-83 (GD), T87, 89-92 (NIST), 107-115 (KHGNRAMSS), and S119 contribute to the 5-phospho-alpha-D-ribose 1-diphosphate site. G79 contributes to the anthranilate binding site. Residue S91 coordinates Mg(2+). Position 110 (N110) interacts with anthranilate. R165 contributes to the anthranilate binding site. Positions 225 and 226 each coordinate Mg(2+).

The protein belongs to the anthranilate phosphoribosyltransferase family. In terms of assembly, homodimer. It depends on Mg(2+) as a cofactor.

It catalyses the reaction N-(5-phospho-beta-D-ribosyl)anthranilate + diphosphate = 5-phospho-alpha-D-ribose 1-diphosphate + anthranilate. Its pathway is amino-acid biosynthesis; L-tryptophan biosynthesis; L-tryptophan from chorismate: step 2/5. In terms of biological role, catalyzes the transfer of the phosphoribosyl group of 5-phosphorylribose-1-pyrophosphate (PRPP) to anthranilate to yield N-(5'-phosphoribosyl)-anthranilate (PRA). This is Anthranilate phosphoribosyltransferase from Dictyoglomus thermophilum (strain ATCC 35947 / DSM 3960 / H-6-12).